A 663-amino-acid chain; its full sequence is Rho GTPase-activating protein 18 (663 aa).

2 disordered regions span residues 14-73 and 85-106; these read AYHP…DESM and RSNE…DEGE. The segment covering 27 to 37 has biased composition (basic and acidic residues); that stretch reads SHVKGGDEATS. The span at 38–51 shows a compositional bias: polar residues; it reads SRRYGQYTINQEGS. Phosphoserine is present on residues Ser65 and Ser68. Basic and acidic residues predominate over residues 85–102; that stretch reads RSNENRQEGQEAIVVKEP. Thr156 carries the phosphothreonine modification. 2 disordered regions span residues 173–228 and 245–277; these read FAQQ…PASE and KEFS…TRIG. Basic and acidic residues-rich tracts occupy residues 178-205 and 212-222; these read EAQE…KDDQ and DSKEQISRVPE. Phosphoserine occurs at positions 260 and 263. The region spanning 324-523 is the Rho-GAP domain; that stretch reads IPLTILLEQD…LLIRYQKILW (200 aa). Ser610 carries the phosphoserine modification.

In terms of assembly, interacts with MPHOSPH6. In terms of tissue distribution, widely expressed: expressed in most organs, except small intestine.

The protein resides in the cytoplasm. Functionally, rho GTPase activating protein that suppresses F-actin polymerization by inhibiting Rho. Rho GTPase activating proteins act by converting Rho-type GTPases to an inactive GDP-bound state. Plays a key role in tissue tension and 3D tissue shape by regulating cortical actomyosin network formation. Acts downstream of YAP1 and inhibits actin polymerization, which in turn reduces nuclear localization of YAP1. Regulates cell shape, spreading, and migration. The protein is Rho GTPase-activating protein 18 of Mus musculus (Mouse).